Consider the following 709-residue polypeptide: MELSSVLPCKRCTPWRGLLLTASLLTCWLLPTTAQVSIESLPPQVVEGENVLLHVDNLPENLIAFVWYKGLTNMSLGVALYSLTYNVTVTGPVHSGRETLYSNGSLWIQNVTQKDTGFYTLRTISNHGEIVSNTSLHLHVYFSTLTCGRAATSAQLSIESVPTSISKGESALLLAHNLPENLRAIFWYKGAIVFKDLEVARYVIGTNSSVPGPAHSGRETMYSNGSLLLQNVTRNDAGFYTLKTLSTDLKTEIAYVQLQVDTCFMSYAGPPTSAQLTVESAPTSVAEGASVLLLVHNLPENLRAIFWYKGVILFKDLEVARYVIGTNSSVLGPAHSGRETMYSNGSLLLQNVTRNDAGFYTLRTLSTDLKAKVVHVQLQVNTSSCCDPLTPALLTIDPVPRHAAKGESVLLQVRNLPEDLRMFIWFKSVYTSQIFKIAEYSRAINYVFRGPAHSGRETVYTNGSLLLQDATEKDTGLYTLQIIYRNFKIETAHVQVSVHTCVHPSTTGQLVIESVPPNVVEGGDVLLLVHNMPENLQSFSWYKGVAIVNRHEISRNIIASNRSTLGPAHSGRETIYSNGSLLLHNATEEDNGLYTLWTVNRHSETQGIHVHIHIYKPVAQPFIRVTESSVRVKSSVVLTCLSADTGTSIQWLFNNQNLRLTQRMSLSQTKCQLSIDPVRREDAGEYRCEVSNPVSSKTSLPVSLDVIIE.

The first 34 residues, Met-1–Ala-34, serve as a signal peptide directing secretion. Ig-like V-type domains lie at Gln-35 to Phe-142, Gln-155 to Thr-262, Gln-275 to Thr-382, Leu-393 to Thr-500, and Gln-509 to Lys-616. N-linked (GlcNAc...) asparagine glycosylation is found at Asn-73, Asn-86, Asn-103, Asn-110, Asn-133, Asn-207, Asn-224, Asn-231, Asn-327, Asn-344, Asn-351, Asn-381, Asn-462, Asn-561, Asn-578, and Asn-585. The region spanning Arg-631–Ser-695 is the Ig-like C2-type domain.

Belongs to the immunoglobulin superfamily. CEA family. As to expression, expression detected only in placenta.

Possibly involved in cell adhesion. The polypeptide is Cell adhesion molecule CEACAM3 (Rattus norvegicus (Rat)).